Consider the following 387-residue polypeptide: Succinate--CoA ligase [ADP-forming] subunit beta (387 aa).

The 228-residue stretch at 9–236 folds into the ATP-grasp domain; that stretch reads KELFAKHNVP…RDATDPLELK (228 aa). Residues Lys-45, 52–54, Ser-94, and Glu-99 contribute to the ATP site; that span reads GRG. Mg(2+)-binding residues include Asn-191 and Asp-205. Substrate-binding positions include Asn-256 and 318 to 320; that span reads GIT.

Belongs to the succinate/malate CoA ligase beta subunit family. As to quaternary structure, heterotetramer of two alpha and two beta subunits. It depends on Mg(2+) as a cofactor.

The enzyme catalyses succinate + ATP + CoA = succinyl-CoA + ADP + phosphate. It carries out the reaction GTP + succinate + CoA = succinyl-CoA + GDP + phosphate. It participates in carbohydrate metabolism; tricarboxylic acid cycle; succinate from succinyl-CoA (ligase route): step 1/1. Its function is as follows. Succinyl-CoA synthetase functions in the citric acid cycle (TCA), coupling the hydrolysis of succinyl-CoA to the synthesis of either ATP or GTP and thus represents the only step of substrate-level phosphorylation in the TCA. The beta subunit provides nucleotide specificity of the enzyme and binds the substrate succinate, while the binding sites for coenzyme A and phosphate are found in the alpha subunit. In Mycobacterium sp. (strain JLS), this protein is Succinate--CoA ligase [ADP-forming] subunit beta.